Consider the following 218-residue polypeptide: MGQKINPLGFRLGTTQGHHSLWFSQPKNYSEGLQEDQKIRDCIKNYVQKNMRTSSGVEGIARIEIQKRIDLIQVIIFMGFPKLLIESRPRGIEELQMTLQKELNCVNRKLNIAVTRIAKPYGNPNILAEFIAGQLKNRVSFRKAMKKAIELTEQADTKGIQIQIAGRIDGKEIARVEWIREGRVPLQTIRAKIDYCAYTVRTIYGVLGIKIWIFLDEE.

Residues 47 to 118 (VQKNMRTSSG…KLNIAVTRIA (72 aa)) enclose the KH type-2 domain.

Belongs to the universal ribosomal protein uS3 family. In terms of assembly, part of the 30S ribosomal subunit.

The protein resides in the plastid. Its subcellular location is the chloroplast. This is Small ribosomal subunit protein uS3c (rps3) from Atropa belladonna (Belladonna).